Reading from the N-terminus, the 471-residue chain is UDP-N-acetylmuramate--L-alanine ligase (471 aa).

Residue 122 to 128 (GTHGKTT) coordinates ATP.

It belongs to the MurCDEF family.

It localises to the cytoplasm. The enzyme catalyses UDP-N-acetyl-alpha-D-muramate + L-alanine + ATP = UDP-N-acetyl-alpha-D-muramoyl-L-alanine + ADP + phosphate + H(+). Its pathway is cell wall biogenesis; peptidoglycan biosynthesis. Cell wall formation. The sequence is that of UDP-N-acetylmuramate--L-alanine ligase from Cutibacterium acnes (strain DSM 16379 / KPA171202) (Propionibacterium acnes).